The sequence spans 118 residues: Large ribosomal subunit protein bL20 (118 aa).

This sequence belongs to the bacterial ribosomal protein bL20 family.

Its function is as follows. Binds directly to 23S ribosomal RNA and is necessary for the in vitro assembly process of the 50S ribosomal subunit. It is not involved in the protein synthesizing functions of that subunit. The protein is Large ribosomal subunit protein bL20 of Shigella flexneri serotype 5b (strain 8401).